The primary structure comprises 88 residues: Arminin 1c (88 aa).

A signal peptide spans Met-1–Ala-18. Positions Glu-19–Ala-57 are excised as a propeptide. Val-85 carries the valine amide modification.

The protein belongs to the arminin family. Expressed in entodermal epithelium along the body column.

It localises to the secreted. Its subcellular location is the target cell membrane. In terms of biological role, antimicrobial peptide with a broad-spectrum antimicrobial activity. Keeps its antibacterial activity under a wide range of salt concentrations that mimic physiological conditions of human blood, which is surprising, since Hydra is an obligate freshwater animal with nearly no salt tolerance. Does not affect red blood cells. The polypeptide is Arminin 1c (Hydra vulgaris (Hydra)).